The following is a 271-amino-acid chain: 4,5-DOPA dioxygenase extradiol (271 aa).

Zn(2+) contacts are provided by His-17, His-55, His-177, and His-232.

The protein belongs to the DODA-type extradiol aromatic ring-opening dioxygenase family. Zn(2+) is required as a cofactor. The cofactor is Fe(2+). As to expression, expressed only in colored petals and pigmented tissues, absent from green stems and leaves.

It localises to the cytoplasm. The catalysed reaction is L-dopa + O2 = 4-(L-alanin-3-yl)-2-hydroxy-cis,cis-muconate 6-semialdehyde + H(+). The protein operates within pigment biosynthesis; betalain biosynthesis. Its function is as follows. Opens the cyclic ring of dihydroxy-phenylalanine (DOPA) between carbons 4 and 5, thus producing an unstable seco-DOPA that rearranges nonenzymatically to betalamic acid. The sequence is that of 4,5-DOPA dioxygenase extradiol (DODA) from Portulaca grandiflora (Rose moss).